The following is a 282-amino-acid chain: Uracil-DNA glycosylase (282 aa).

The tract at residues 15-40 (SAASKRKSASNTENIPEKVPAGNENQ) is disordered. Residue D123 is the Proton acceptor of the active site.

Belongs to the uracil-DNA glycosylase (UDG) superfamily. UNG family.

It localises to the mitochondrion. The protein localises to the nucleus. The catalysed reaction is Hydrolyzes single-stranded DNA or mismatched double-stranded DNA and polynucleotides, releasing free uracil.. Its activity is regulated as follows. Inhibited by UGI, a B.subtilis bacteriophage PBS2 peptide inhibitor. In terms of biological role, excises uracil residues from the DNA which can arise as a result of misincorporation of dUMP residues by DNA polymerase or due to deamination of cytosine. This is Uracil-DNA glycosylase from Caenorhabditis elegans.